Reading from the N-terminus, the 518-residue chain is MVFSSNVFLFMFLPIFLGLYYLSGQRYRNLLLLIASYIFYAWWRVDFLALFIGVTVWNYWIGLKVGAAGVRTKPAQRWLLLGVIVDLCILGYFKYANFGVDSINAAMTSMGLEPFILTHVLLPIGISFYVFESISYIIDVYRGDTPATRNLIDFAAFVAIFPHLIAGPVLRFRDLADQFNNRTHTLDKFSEGATRFMQGFIKKVFIADTLAIVADHCFALQNPTTGDAWLGALAYTAQLYFDFSGYSDMAIGLGLMMGFRFMENFKQPYISQSITEFWRRWHISLSTWLRDYLYITLGGNRGGKVATYRNLFLTMLLGGLWHGANVTYIIWGAWHGMWLAIEKAVGINTKPYSFNVIRWALTFLLVVIGWVIFRSENLHVAGRMYGAMFSFGDWQLSELNRASLTGLQVATLVVAYATLAFFGLRDFYQNREKDSGKSARADGPATEQPGTIKAVPGDAPGSLHLPGYTVGSEAQVQPAYWVADWPRYAMRALILLLFVASILKLSAQSFSPFLYFQF.

8 helical membrane-spanning segments follow: residues 2 to 24, 39 to 61, 78 to 100, 115 to 137, 150 to 172, 319 to 341, 354 to 373, and 402 to 424; these read VFSSNVFLFMFLPIFLGLYYLSG, FYAWWRVDFLALFIGVTVWNYWI, WLLLGVIVDLCILGYFKYANFGV, FILTHVLLPIGISFYVFESISYI, NLIDFAAFVAIFPHLIAGPVLRF, GLWHGANVTYIIWGAWHGMWLAI, FNVIRWALTFLLVVIGWVIF, and ASLTGLQVATLVVAYATLAFFGL. Residue His-322 is part of the active site. The segment at 435–456 is disordered; it reads SGKSARADGPATEQPGTIKAVP. A helical membrane pass occupies residues 493–515; the sequence is LILLLFVASILKLSAQSFSPFLY.

It belongs to the membrane-bound acyltransferase family.

The protein resides in the cell inner membrane. It functions in the pathway glycan biosynthesis; alginate biosynthesis. In terms of biological role, together with AlgJ and AlgF, forms an inner membrane complex which probably interacts with the alginate polymerization-transport complex and adds acetyl groups at the O-2 and O-3 positions of mannuronate residues. Acetylation of alginate is important for the architecture of biofilms and increases the ability of alginate to act as a defense barrier. The protein is Probable alginate O-acetylase AlgI (algI) of Pseudomonas syringae pv. tomato (strain ATCC BAA-871 / DC3000).